The following is a 257-amino-acid chain: Staphylococcal secretory antigen SsaA (257 aa).

A signal peptide spans 1-26 (MKKIATATIATAGIATFAFAHHDAQA). Tandem repeats lie at residues 73-75 (YNN), 76-78 (YNN), 84-86 (YNN), 87-89 (YSN), 90-92 (YNN), 93-95 (YSN), 96-98 (YNN), and 99-101 (YNN). Residues 73–101 (YNNYNNYNYYGYNNYSNYNNYSNYNNYNN) form an 8 X 3 AA repeats of Y-[NS]-N region. Residues 101-144 (NYQSNNTQSQRTTQPTGGLGASYSTSSSNVHVTTTSAPSSNGVS) are disordered. A compositionally biased stretch (polar residues) spans 107 to 116 (TQSQRTTQPT). The span at 122 to 136 (SYSTSSSNVHVTTTS) shows a compositional bias: low complexity. Residues 136–257 (SAPSSNGVSL…SQAASYNYIH (122 aa)) form the Peptidase C51 domain.

The protein resides in the secreted. Functionally, not known; immunogenic protein expressed during sepsis and particularly during episodes of infective endocarditis. The sequence is that of Staphylococcal secretory antigen SsaA (ssaA) from Staphylococcus epidermidis.